Consider the following 717-residue polypeptide: Delta-like protein D (717 aa).

The signal sequence occupies residues 1–19 (MGRLMIAVLLCVMISQGFC). Topologically, residues 20-547 (SGVFELKLQE…EEDDGGFPWT (528 aa)) are extracellular. In terms of domain architecture, DSL spans 175–219 (FVCDEHYYGEGCSVFCRPRDDTFGHFTCGERGEIICNSGWKGQYC). Cystine bridges form between Cys-177–Cys-186, Cys-190–Cys-202, Cys-210–Cys-219, Cys-224–Cys-235, Cys-228–Cys-241, Cys-243–Cys-252, Cys-261–Cys-266, Cys-274–Cys-283, Cys-290–Cys-302, Cys-296–Cys-312, Cys-314–Cys-323, Cys-330–Cys-341, Cys-335–Cys-350, Cys-352–Cys-361, Cys-368–Cys-379, Cys-373–Cys-389, Cys-391–Cys-400, Cys-407–Cys-418, Cys-412–Cys-427, Cys-429–Cys-438, Cys-445–Cys-456, Cys-450–Cys-465, Cys-467–Cys-476, Cys-483–Cys-494, Cys-488–Cys-503, and Cys-505–Cys-514. EGF-like domains are found at residues 220-253 (TEPICLPGCDEDHGFCDKPGECKCRVGFSGKYCD), 257-284 (RYPGCLHGTCQQPWQCNCQEGWGGLFCN), and 286-324 (DLNYCTHHKPCQNGATCTNTGQGSYTCSCRPGFTGDSCE). The region spanning 326–362 (EVNECSGSPCRNGGSCTDLENTYSCTCPPGFYGRNCE) is the EGF-like 4; calcium-binding domain. EGF-like domains lie at 364-401 (SAMTCADGPCFNGGHCADNPEGGYFCQCPMGYAGFNCE) and 403-439 (KIDHCSSNPCSNDAQCLDLVDSYLCQCPEGFTGTHCE). Residues 441–477 (NIDECATYPCQNGGTCQDGLSDYTCTCPPGYTGKNCT) form the EGF-like 7; calcium-binding domain. Residue Asn-475 is glycosylated (N-linked (GlcNAc...) asparagine). An EGF-like 8 domain is found at 479–515 (AVNKCLHNPCHNGATCHEMDNRYVCACIPGYGGRNCQ). The chain crosses the membrane as a helical span at residues 548 to 568 (AVCAGIILVLLVLIGGSVFVI). At 569–717 (YIRLKLQQRS…KDECIIATEV (149 aa)) the chain is on the cytoplasmic side. Residues 649 to 693 (EDLGKEDSERSEATKCEPLDSDSEEKHRNHLKSDSSERKRTESLC) are disordered.

In terms of assembly, interacts with mib. In terms of processing, ubiquitinated by mib, leading to its endocytosis and subsequent degradation. Expressed in both mesodermal and neuroectodermal regions. In the developing nervous system, it is expressed in overlapping regions with deltaB (dlb) and deltaA (dla); in the neural plate, dld is expressed in patches of contiguous cells with dla, while dlb is confined to scattered cells within those patches that will differentiate as neurons. In somites, it marks the anterior part of each formed somite, while deltaC (dlc) marks the posterior part. In 24 hours embryos, expressed in the hindbrain in stripes adjacent to rhombomere boundaries, but not in the actual boundary cells.

The protein resides in the membrane. Its function is as follows. Acts as a ligand for Notch receptors and is involved in primary neurogenesis and somitogenesis. Can activate Notch receptors, thereby playing a key role in lateral inhibition, a process that prevents the immediate neighbors of each nascent neural cell from simultaneously embarking on neural differentiation. Required in somite segmentation to keep the oscillations of neighboring presomitic mesoderm cells synchronized. In Danio rerio (Zebrafish), this protein is Delta-like protein D (dld).